The chain runs to 182 residues: Glycerol-3-phosphate acyltransferase 1 (182 aa).

5 helical membrane passes run 5-25, 54-74, 81-101, 117-137, and 157-177; these read MQFL…AYIV, GYFI…VSIA, STFV…PIVF, IAFD…FYLI, and ILYS…VLIL.

It belongs to the PlsY family. Probably interacts with PlsX.

It localises to the cell membrane. It carries out the reaction an acyl phosphate + sn-glycerol 3-phosphate = a 1-acyl-sn-glycero-3-phosphate + phosphate. The protein operates within lipid metabolism; phospholipid metabolism. Its function is as follows. Catalyzes the transfer of an acyl group from acyl-phosphate (acyl-PO(4)) to glycerol-3-phosphate (G3P) to form lysophosphatidic acid (LPA). This enzyme utilizes acyl-phosphate as fatty acyl donor, but not acyl-CoA or acyl-ACP. This chain is Glycerol-3-phosphate acyltransferase 1, found in Bacillus cereus (strain ATCC 10987 / NRS 248).